The sequence spans 312 residues: Porphobilinogen deaminase (312 aa).

Cys-241 is subject to S-(dipyrrolylmethanemethyl)cysteine.

Belongs to the HMBS family. As to quaternary structure, monomer. Requires dipyrromethane as cofactor.

It carries out the reaction 4 porphobilinogen + H2O = hydroxymethylbilane + 4 NH4(+). The protein operates within porphyrin-containing compound metabolism; protoporphyrin-IX biosynthesis; coproporphyrinogen-III from 5-aminolevulinate: step 2/4. In terms of biological role, tetrapolymerization of the monopyrrole PBG into the hydroxymethylbilane pre-uroporphyrinogen in several discrete steps. This is Porphobilinogen deaminase from Pelotomaculum thermopropionicum (strain DSM 13744 / JCM 10971 / SI).